The following is a 210-amino-acid chain: Tumor protein D53 homolog (210 aa).

Residues 22-73 are a coiled coil; sequence VTDVDFTSMISEEEKEELKAELAKLEDEISTLRQVLAAKEKHLIEIKQKLGM. Polar residues predominate over residues 185-197; sequence SSTAHASAQSSLA. Residues 185–210 are disordered; sequence SSTAHASAQSSLAGTRLPESEEELQC.

This sequence belongs to the TPD52 family. In terms of assembly, forms a homodimer or heterodimer with other members of the family.

The sequence is that of Tumor protein D53 homolog (TPD52L1) from Gallus gallus (Chicken).